Here is a 96-residue protein sequence, read N- to C-terminus: Co-chaperonin GroES (96 aa).

This sequence belongs to the GroES chaperonin family. In terms of assembly, heptamer of 7 subunits arranged in a ring. Interacts with the chaperonin GroEL.

It localises to the cytoplasm. In terms of biological role, together with the chaperonin GroEL, plays an essential role in assisting protein folding. The GroEL-GroES system forms a nano-cage that allows encapsulation of the non-native substrate proteins and provides a physical environment optimized to promote and accelerate protein folding. GroES binds to the apical surface of the GroEL ring, thereby capping the opening of the GroEL channel. The protein is Co-chaperonin GroES of Shewanella piezotolerans (strain WP3 / JCM 13877).